Reading from the N-terminus, the 290-residue chain is 4-hydroxybenzoate octaprenyltransferase (290 aa).

8 helical membrane-spanning segments follow: residues 23-43, 46-66, 99-119, 141-161, 163-183, 213-233, 234-254, and 268-288; these read IGALLLLWPTLWALWVATPGV, LWILAVFVAGVWLMRAAGCVV, LFVVLVLISFLLVLTLNTMTI, LPQVVLGAAFGWSIPMAFAAV, ESVPLSCWLMFLANILWAVAY, LIIGIFQIGVLALMAIIGELN, GLGWGYYWSILVAGALFVYQQ, and AFMNNNYVGLVLFLGLAMSYW.

Belongs to the UbiA prenyltransferase family. The cofactor is Mg(2+).

Its subcellular location is the cell inner membrane. It catalyses the reaction all-trans-octaprenyl diphosphate + 4-hydroxybenzoate = 4-hydroxy-3-(all-trans-octaprenyl)benzoate + diphosphate. Its pathway is cofactor biosynthesis; ubiquinone biosynthesis. Catalyzes the prenylation of para-hydroxybenzoate (PHB) with an all-trans polyprenyl group. Mediates the second step in the final reaction sequence of ubiquinone-8 (UQ-8) biosynthesis, which is the condensation of the polyisoprenoid side chain with PHB, generating the first membrane-bound Q intermediate 3-octaprenyl-4-hydroxybenzoate. The polypeptide is 4-hydroxybenzoate octaprenyltransferase (Escherichia coli (strain UTI89 / UPEC)).